The chain runs to 353 residues: uncharacterized protein (353 aa).

A helical transmembrane segment spans residues 267–287; the sequence is GLPLVVIEAMAFGLPIVAFNC.

It belongs to the glycosyltransferase group 1 family. Glycosyltransferase 4 subfamily.

It is found in the membrane. This is an uncharacterized protein from Haemophilus influenzae (strain ATCC 51907 / DSM 11121 / KW20 / Rd).